We begin with the raw amino-acid sequence, 379 residues long: Fucose-specific lectin g276 (379 aa).

E126 is a binding site for alpha-L-fucose. Beta-L-fucose is bound by residues E126, R163, and W185. Alpha-L-fucose is bound by residues W185, R222, and E234. 2 residues coordinate beta-L-fucose: W242 and E282. W289 serves as a coordination point for alpha-L-fucose.

This sequence belongs to the fungal fucose-specific lectin family.

Functionally, lectin that specifically binds to L-fucose. Is associated with the morphogenesis of the fungus, and plays a role in the formation of the constricting rings involved in nematode-trapping. This chain is Fucose-specific lectin g276, found in Arthrobotrys oligospora (strain ATCC 24927 / CBS 115.81 / DSM 1491) (Nematode-trapping fungus).